Consider the following 465-residue polypeptide: tRNA-2-methylthio-N(6)-dimethylallyladenosine synthase (465 aa).

The MTTase N-terminal domain maps to 5 to 125 (RKLHIKSFGC…LPELLEKARR (121 aa)). Residues Cys14, Cys50, Cys88, Cys166, Cys170, and Cys173 each coordinate [4Fe-4S] cluster. Residues 152–382 (RARGVSAFVT…QLQGLIDSQQ (231 aa)) enclose the Radical SAM core domain. Residues 387 to 449 (RASIGTTVDV…RYSLIGELVK (63 aa)) enclose the TRAM domain.

This sequence belongs to the methylthiotransferase family. MiaB subfamily. In terms of assembly, monomer. [4Fe-4S] cluster serves as cofactor.

The protein resides in the cytoplasm. The enzyme catalyses N(6)-dimethylallyladenosine(37) in tRNA + (sulfur carrier)-SH + AH2 + 2 S-adenosyl-L-methionine = 2-methylsulfanyl-N(6)-dimethylallyladenosine(37) in tRNA + (sulfur carrier)-H + 5'-deoxyadenosine + L-methionine + A + S-adenosyl-L-homocysteine + 2 H(+). Catalyzes the methylthiolation of N6-(dimethylallyl)adenosine (i(6)A), leading to the formation of 2-methylthio-N6-(dimethylallyl)adenosine (ms(2)i(6)A) at position 37 in tRNAs that read codons beginning with uridine. This chain is tRNA-2-methylthio-N(6)-dimethylallyladenosine synthase, found in Rhodopseudomonas palustris (strain BisA53).